Here is a 636-residue protein sequence, read N- to C-terminus: Biosynthetic arginine decarboxylase (636 aa).

Lys-101 is modified (N6-(pyridoxal phosphate)lysine). 286 to 296 (FDVGGGLAVDY) lines the substrate pocket.

It belongs to the Orn/Lys/Arg decarboxylase class-II family. SpeA subfamily. It depends on Mg(2+) as a cofactor. The cofactor is pyridoxal 5'-phosphate.

The enzyme catalyses L-arginine + H(+) = agmatine + CO2. The protein operates within amine and polyamine biosynthesis; agmatine biosynthesis; agmatine from L-arginine: step 1/1. Catalyzes the biosynthesis of agmatine from arginine. This is Biosynthetic arginine decarboxylase from Shewanella frigidimarina (strain NCIMB 400).